The following is a 546-amino-acid chain: Chaperonin GroEL (546 aa).

ATP-binding positions include 30 to 33 (TLGP), K51, 87 to 91 (DGTTT), G415, and D496. The tract at residues 527–546 (EKKAPAGAPGGMGGMGDMDF) is disordered. Residues 534–546 (APGGMGGMGDMDF) are compositionally biased toward gly residues.

It belongs to the chaperonin (HSP60) family. Forms a cylinder of 14 subunits composed of two heptameric rings stacked back-to-back. Interacts with the co-chaperonin GroES.

The protein resides in the cytoplasm. It carries out the reaction ATP + H2O + a folded polypeptide = ADP + phosphate + an unfolded polypeptide.. Together with its co-chaperonin GroES, plays an essential role in assisting protein folding. The GroEL-GroES system forms a nano-cage that allows encapsulation of the non-native substrate proteins and provides a physical environment optimized to promote and accelerate protein folding. In Rhodospirillum centenum (strain ATCC 51521 / SW), this protein is Chaperonin GroEL.